The following is a 347-amino-acid chain: MNHYFRAIGSMLILVYSTFFAIFFIDKVFVNIMYFQGMFYTQIFGIPVLLFLNLMVILLCIIVGSVLAYKINQQNHWLKDQIERSIEGQTVGINDQNIELYNETIELYQTLVPLNQEVHKLRMKTQNLTNESYNINDVKVKKIIEDERQRLARELHDSVSQQLFAASMMLSAIKETELKAPLDQQIPVLEKMIQDSQLEMRALLLHLRPIGLKDKSLGEGIKDLVVDLQKKVPMKVVHDIEEFKVPKGIEDHLFRITQEAISNTLRHSKGTKVTIELFNREEYLLLRIQDNGKGFNVDDKVEQSYGLKNMRERALEIGATFHIVSLPDAGTRIEVKAPLNKEDSNAD.

Helical transmembrane passes span 13-33 (ILVY…VNIM) and 43-63 (IFGI…CIIV). The Histidine kinase domain maps to 150–341 (RLARELHDSV…RIEVKAPLNK (192 aa)).

The protein localises to the cell membrane. The enzyme catalyses ATP + protein L-histidine = ADP + protein N-phospho-L-histidine.. Its function is as follows. Member of the two-component regulatory system VraS/VraR involved in the control of the cell wall peptidoglycan biosynthesis. Probably activates VraR by phosphorylation. The protein is Sensor protein VraS (vraS) of Staphylococcus saprophyticus subsp. saprophyticus (strain ATCC 15305 / DSM 20229 / NCIMB 8711 / NCTC 7292 / S-41).